We begin with the raw amino-acid sequence, 396 residues long: Pectinesterase (396 aa).

The first 21 residues, 1–21 (MQSKTLYLKATALLGGCTVFA), serve as a signal peptide directing secretion. Substrate is bound at residue T174. D232 serves as the catalytic Proton donor. D259 acts as the Nucleophile in catalysis. Residues R324 and W326 each contribute to the substrate site.

This sequence belongs to the pectinesterase family.

Its subcellular location is the secreted. It carries out the reaction [(1-&gt;4)-alpha-D-galacturonosyl methyl ester](n) + n H2O = [(1-&gt;4)-alpha-D-galacturonosyl](n) + n methanol + n H(+). Its pathway is glycan metabolism; pectin degradation; 2-dehydro-3-deoxy-D-gluconate from pectin: step 1/5. Involved in maceration and soft-rotting of plant tissue. The polypeptide is Pectinesterase (pme) (Ralstonia nicotianae (strain ATCC BAA-1114 / GMI1000) (Ralstonia solanacearum)).